Reading from the N-terminus, the 652-residue chain is Acetyl-coenzyme A synthetase (652 aa).

Residues 191–194 (RAGR), threonine 311, and asparagine 335 each bind CoA. Residues 387 to 389 (GEP), 411 to 416 (DTWWQT), aspartate 500, and arginine 515 contribute to the ATP site. Serine 523 contributes to the CoA binding site. Arginine 526 contacts ATP. The Mg(2+) site is built by valine 537, histidine 539, and isoleucine 542. Arginine 584 provides a ligand contact to CoA. Lysine 609 carries the post-translational modification N6-acetyllysine; by autocatalysis.

This sequence belongs to the ATP-dependent AMP-binding enzyme family. As to quaternary structure, forms a 1:1 complex with CobB/NAD-dependent deacetylase. The cofactor is Mg(2+). Autoacetylated. Deacetylation by CobB activates the enzyme.

The enzyme catalyses acetate + ATP + CoA = acetyl-CoA + AMP + diphosphate. Its function is as follows. Catalyzes the conversion of acetate into acetyl-CoA (AcCoA), an essential intermediate at the junction of anabolic and catabolic pathways. Acs undergoes a two-step reaction. In the first half reaction, Acs combines acetate with ATP to form acetyl-adenylate (AcAMP) intermediate. In the second half reaction, it can then transfer the acetyl group from AcAMP to the sulfhydryl group of CoA, forming the product AcCoA. Enables the cell to use acetate during aerobic growth to generate energy via the TCA cycle, and biosynthetic compounds via the glyoxylate shunt. Acetylates CheY, the response regulator involved in flagellar movement and chemotaxis. This Escherichia coli (strain K12) protein is Acetyl-coenzyme A synthetase.